Reading from the N-terminus, the 1033-residue chain is Tyrosine-protein kinase-like otk (1033 aa).

Residues Met-1–Ala-22 form the signal peptide. Residues Ser-23 to Ala-581 lie on the Extracellular side of the membrane. Ig-like C2-type domains lie at Ser-25 to Ser-114, Leu-113 to Ser-199, Pro-251 to Asn-365, Pro-368 to Asn-463, and Pro-468 to Val-558. Residue Asn-39 is glycosylated (N-linked (GlcNAc...) asparagine). 4 disulfide bridges follow: Cys-46-Cys-95, Cys-137-Cys-188, Cys-276-Cys-354, and Cys-399-Cys-447. Asn-336, Asn-417, Asn-429, Asn-444, Asn-457, Asn-512, and Asn-524 each carry an N-linked (GlcNAc...) asparagine glycan. Cys-490 and Cys-542 are disulfide-bonded. The helical transmembrane segment at Val-582–Trp-602 threads the bilayer. Topologically, residues Cys-603 to Lys-1033 are cytoplasmic. Disordered stretches follow at residues Leu-617–Ala-679 and Ser-718–Met-760. The segment covering Lys-655 to Arg-673 has biased composition (polar residues). Ser-678 carries the phosphoserine modification. The Protein kinase; inactive domain occupies Leu-692–Met-1028. Positions Ser-720–Ser-731 are enriched in basic and acidic residues.

This sequence belongs to the protein kinase superfamily. Tyr protein kinase family. Insulin receptor subfamily. In terms of assembly, interacts with plexA; component of a receptor complex that mediates the repulsive signaling in response to Semaphorin ligands. In terms of tissue distribution, dynamically expressed during embryogenesis in several areas of the developing nervous system, including neurons and fasciculating axons. Expression in stage 7 embryos is seen in the anterior midgut primordia, cephalic furrow and along the germinal band. At stage 11, expression is in 15 stripes over the trunk region, and in the anterior and posterior midgut primordia. Stage 12 shows expression in the developing nervous system, procephalic lobe and maxillar bud. Stage 13 shows expression in the ventral cord, maxillar segment and in three regions of the gut. At stage 16 expression is preferentially detected throughout the nervous system, including the neuromers in the ventral cord and the supraesophageal ganglion (at protein level). In larva, expression is seen in developing R cells and is localized predominantly to R1-R6 growth cones.

Its subcellular location is the cell membrane. Functionally, acts as a calcium-dependent, homophilic cell adhesion molecule that regulates neural recognition during the development of the nervous system. Component of the repulsive Plexin signaling response to regulate motor axon guidance at the embryonic stage. Also component of a receptor complex that is required in the adult visual system to innervate the lamina layer; specific targeting of R1-R6 axons. The protein is Tyrosine-protein kinase-like otk of Drosophila melanogaster (Fruit fly).